A 223-amino-acid polypeptide reads, in one-letter code: Uracil-DNA glycosylase (223 aa).

Asp67 serves as the catalytic Proton acceptor.

The protein belongs to the uracil-DNA glycosylase (UDG) superfamily. UNG family.

It localises to the cytoplasm. It catalyses the reaction Hydrolyzes single-stranded DNA or mismatched double-stranded DNA and polynucleotides, releasing free uracil.. Functionally, excises uracil residues from the DNA which can arise as a result of misincorporation of dUMP residues by DNA polymerase or due to deamination of cytosine. This Borreliella burgdorferi (strain ZS7) (Borrelia burgdorferi) protein is Uracil-DNA glycosylase.